The primary structure comprises 80 residues: Acyl carrier protein (80 aa).

The Carrier domain occupies 4-79 (DEVKGQVYDI…DAINYIVEKK (76 aa)). The residue at position 39 (Ser-39) is an O-(pantetheine 4'-phosphoryl)serine.

The protein belongs to the acyl carrier protein (ACP) family. In terms of processing, 4'-phosphopantetheine is transferred from CoA to a specific serine of apo-ACP by AcpS. This modification is essential for activity because fatty acids are bound in thioester linkage to the sulfhydryl of the prosthetic group.

Its subcellular location is the cytoplasm. The protein operates within lipid metabolism; fatty acid biosynthesis. Functionally, carrier of the growing fatty acid chain in fatty acid biosynthesis. The chain is Acyl carrier protein from Chloroherpeton thalassium (strain ATCC 35110 / GB-78).